A 461-amino-acid polypeptide reads, in one-letter code: UDP-glycosyltransferase 82A1 (461 aa).

UDP-alpha-D-glucose contacts are provided by residues serine 292, 349–351 (APQ), 366–374 (HCGWNSTME), and 388–391 (AGDQ).

The protein belongs to the UDP-glycosyltransferase family.

This is UDP-glycosyltransferase 82A1 (UGT82A1) from Arabidopsis thaliana (Mouse-ear cress).